A 162-amino-acid polypeptide reads, in one-letter code: Cyclic pyranopterin monophosphate synthase (162 aa).

Substrate-binding positions include 75–77 and 116–117; these read MCH and ME. Asp131 is an active-site residue.

The protein belongs to the MoaC family. In terms of assembly, homohexamer; trimer of dimers.

It carries out the reaction (8S)-3',8-cyclo-7,8-dihydroguanosine 5'-triphosphate = cyclic pyranopterin phosphate + diphosphate. It participates in cofactor biosynthesis; molybdopterin biosynthesis. Its function is as follows. Catalyzes the conversion of (8S)-3',8-cyclo-7,8-dihydroguanosine 5'-triphosphate to cyclic pyranopterin monophosphate (cPMP). The chain is Cyclic pyranopterin monophosphate synthase from Staphylococcus epidermidis (strain ATCC 35984 / DSM 28319 / BCRC 17069 / CCUG 31568 / BM 3577 / RP62A).